A 451-amino-acid chain; its full sequence is Bifunctional protein GlmU (451 aa).

Positions 1–229 are pyrophosphorylase; that stretch reads MQRNAVILAA…FNEIMGVNDR (229 aa). UDP-N-acetyl-alpha-D-glucosamine is bound by residues 8–11, Lys-22, Gln-72, and 77–78; these read LAAG and GT. Mg(2+) is bound at residue Asp-102. UDP-N-acetyl-alpha-D-glucosamine-binding residues include Gly-139, Glu-154, and Asn-227. Asn-227 provides a ligand contact to Mg(2+). Positions 230–250 are linker; it reads VMLSNAEKALQQRINIEHMRN. Residues 251–451 are N-acetyltransferase; sequence GVTIIDPTTT…QITKEGYLKK (201 aa). Arg-332 and Lys-350 together coordinate UDP-N-acetyl-alpha-D-glucosamine. The active-site Proton acceptor is the His-362. Positions 365 and 376 each coordinate UDP-N-acetyl-alpha-D-glucosamine. Residues 385-386, Ala-422, and Arg-439 each bind acetyl-CoA; that span reads NY.

It in the N-terminal section; belongs to the N-acetylglucosamine-1-phosphate uridyltransferase family. In the C-terminal section; belongs to the transferase hexapeptide repeat family. As to quaternary structure, homotrimer. It depends on Mg(2+) as a cofactor.

It localises to the cytoplasm. The enzyme catalyses alpha-D-glucosamine 1-phosphate + acetyl-CoA = N-acetyl-alpha-D-glucosamine 1-phosphate + CoA + H(+). It catalyses the reaction N-acetyl-alpha-D-glucosamine 1-phosphate + UTP + H(+) = UDP-N-acetyl-alpha-D-glucosamine + diphosphate. The protein operates within nucleotide-sugar biosynthesis; UDP-N-acetyl-alpha-D-glucosamine biosynthesis; N-acetyl-alpha-D-glucosamine 1-phosphate from alpha-D-glucosamine 6-phosphate (route II): step 2/2. It functions in the pathway nucleotide-sugar biosynthesis; UDP-N-acetyl-alpha-D-glucosamine biosynthesis; UDP-N-acetyl-alpha-D-glucosamine from N-acetyl-alpha-D-glucosamine 1-phosphate: step 1/1. Its pathway is bacterial outer membrane biogenesis; LPS lipid A biosynthesis. Catalyzes the last two sequential reactions in the de novo biosynthetic pathway for UDP-N-acetylglucosamine (UDP-GlcNAc). The C-terminal domain catalyzes the transfer of acetyl group from acetyl coenzyme A to glucosamine-1-phosphate (GlcN-1-P) to produce N-acetylglucosamine-1-phosphate (GlcNAc-1-P), which is converted into UDP-GlcNAc by the transfer of uridine 5-monophosphate (from uridine 5-triphosphate), a reaction catalyzed by the N-terminal domain. This Staphylococcus haemolyticus (strain JCSC1435) protein is Bifunctional protein GlmU.